A 795-amino-acid polypeptide reads, in one-letter code: MGENEASLPNTSLQGKKMAYQKVHADQRAPGHSQYLDNDDLQATALDLEWDMEKELEESGFDQFQLDGAENQNLGHSETIDLNLDSIQPATSPKGRFQRLQEESDYITHYTRSAPKSNRCNFCHVLKILCTATILFIFGILIGYYVHTNCPSDAPSSGTVDPQLYQEILKTIQAEDIKKSFRNLVQLYKNEDDMEISKKIKTQWTSLGLEDVQFVNYSVLLDLPGPSPSTVTLSSSGQCFHPNGQPCSEEARKDSSQDLLYSYAAYSAKGTLKAEVIDVSYGMADDLKRIRKIKNVTNQIALLKLGKLPLLYKLSSLEKAGFGGVLLYIDPCDLPKTVNPSHDTFMVSLNPGGDPSTPGYPSVDESFRQSRSNLTSLLVQPISAPLVAKLISSPKARTKNEACSSLELPNNEIRVVSMQVQTVTKLKTVTNVVGFVMGLTSPDRYIIVGSHHHTAHSYNGQEWASSTAIITAFIRALMSKVKRGWRPDRTIVFCSWGGTAFGNIGSYEWGEDFKKVLQKNVVAYISLHSPIRGNSSLYPVASPSLQQLVVEKNNFNCTRRAQCPETNISSIQIQGDADYFINHLGVPIVQFAYEDIKTLEGPSFLSEARFSTRATKIEEMDPSFNLHETITKLSGEVILQIANEPVLPFNALDIALEVQNNLKGDQPNTHQLLAMALRLRESAELFQSDEMRPANDPKERAPIRIRMLNDILQDMEKSFLVKQAPPGFYRNILYHLDEKTSRFSILIEAWEHCKPLASNETLQEALSEVLNSINSAQVYFKAGLDVFKSVLDGKN.

The segment at 1-38 is disordered; that stretch reads MGENEASLPNTSLQGKKMAYQKVHADQRAPGHSQYLDN. The Cytoplasmic portion of the chain corresponds to 1–121; it reads MGENEASLPN…RSAPKSNRCN (121 aa). Ser92 carries the post-translational modification Phosphoserine. The helical; Signal-anchor for type II membrane protein transmembrane segment at 122 to 142 threads the bilayer; the sequence is FCHVLKILCTATILFIFGILI. The Extracellular segment spans residues 143–795; the sequence is GYYVHTNCPS…VFKSVLDGKN (653 aa). N-linked (GlcNAc...) asparagine glycans are attached at residues Asn295, Asn373, Asn534, and Asn759.

This sequence belongs to the peptidase M28 family. M28B subfamily. Expressed at higher level in kidney and placenta. In embryo, it is mainly confined to duodenal and stomach endoderm, mesonephros, metanephros and pancreas.

It localises to the membrane. Functionally, may be catalytically inactive. This Homo sapiens (Human) protein is Inactive N-acetylated-alpha-linked acidic dipeptidase-like protein 2 (NAALADL2).